The sequence spans 261 residues: Global transcriptional regulator CodY (261 aa).

The segment at 1–159 (MANLLSKTRR…SSTVVGIQLL (159 aa)) is GAF domain. Residues 207 to 226 (ASVIADRIGITRSVIVNALR) constitute a DNA-binding region (H-T-H motif).

This sequence belongs to the CodY family.

It localises to the cytoplasm. DNA-binding global transcriptional regulator which is involved in the adaptive response to starvation and acts by directly or indirectly controlling the expression of numerous genes in response to nutrient availability. During rapid exponential growth, CodY is highly active and represses genes whose products allow adaptation to nutrient depletion. This Streptococcus mutans serotype c (strain ATCC 700610 / UA159) protein is Global transcriptional regulator CodY.